The chain runs to 630 residues: Replication protein A 70 kDa DNA-binding subunit B (630 aa).

A DNA-binding region (OB) is located at residues 200–282; that stretch reads IIKVRVTSKG…KTVHNDYEMT (83 aa). A C4-type zinc finger spans residues 496-516; that stretch reads CKTCNKKVTEAIGSGYWCEGC.

It belongs to the replication factor A protein 1 family. In terms of assembly, heterotrimer of RPA1, RPA2 and RPA3 (canonical replication protein A complex). Interacts with RPA2A. Expressed in root tips, roots, shoot apical meristem (SAM) and young leaves, and at lower levels in mature leaves, flag leaves and ears.

It localises to the nucleus. Functionally, component of the replication protein A complex (RPA) required for DNA recombination, repair and replication. The activity of RPA is mediated by single-stranded DNA binding and protein interactions. Probably involved in repair of double-strand DNA breaks (DSBs) induced by genotoxic stresses. In Oryza sativa subsp. japonica (Rice), this protein is Replication protein A 70 kDa DNA-binding subunit B (RPA1B).